Reading from the N-terminus, the 467-residue chain is Receptor-like cytosolic serine/threonine-protein kinase RBK1 (467 aa).

Residues 1–24 are compositionally biased toward basic and acidic residues; sequence MAVEDNKNSESKNHQEVELHRNDL. Residues 1–73 form a disordered region; that stretch reads MAVEDNKNSE…PFSNTTKTVS (73 aa). Residues 40-71 show a composition bias toward low complexity; the sequence is SDSDNSSSSCSSCSSDDKSSSTSSPFSNTTKT. Position 142 is a phosphothreonine (threonine 142). The 278-residue stretch at 153 to 430 folds into the Protein kinase domain; the sequence is FNPENMIGKG…LRGEDGPAEL (278 aa). Residues 159–167 and lysine 181 contribute to the ATP site; that span reads IGKGGHAEV. Residue aspartate 278 is the Proton acceptor of the active site. A Phosphoserine modification is found at serine 282. At threonine 318 the chain carries Phosphothreonine. Position 326 is a phosphotyrosine (tyrosine 326).

This sequence belongs to the protein kinase superfamily. Ser/Thr protein kinase family. Interacts with ARAC5 and ARAC10. In terms of tissue distribution, mostly expressed in vasculature, hydathode endothem, leaf mesophyll cells and trichomes.

It localises to the cytoplasm. It is found in the endomembrane system. Its subcellular location is the nucleus. The enzyme catalyses L-seryl-[protein] + ATP = O-phospho-L-seryl-[protein] + ADP + H(+). The catalysed reaction is L-threonyl-[protein] + ATP = O-phospho-L-threonyl-[protein] + ADP + H(+). This is Receptor-like cytosolic serine/threonine-protein kinase RBK1 (RBK1) from Arabidopsis thaliana (Mouse-ear cress).